The chain runs to 431 residues: Extensin-3 (431 aa).

The N-terminal stretch at 1–27 (MGSPMASLVATLLVLTISLTFVSQSTA) is a signal peptide. 3 tandem repeats follow at residues 33–41 (SPPPPVKHY), 49–55 (SPPPVYH), and 56–63 (SPPPPKKH). Residues 33 to 384 (SPPPPVKHYT…KSPPPPVKHY (352 aa)) form a 13 X 9 AA repeats of S-P-P-P-P-V-K-H-Y region. The disordered stretch occupies residues 42–408 (TPPVKHYSPP…KYVYKSPPPP (367 aa)). A compositionally biased stretch (pro residues) spans 49-59 (SPPPVYHSPPP). Residues 49–391 (SPPPVYHSPP…KHYSPPPVYH (343 aa)) are 13 X 7 AA repeats of S-P-P-P-V-Y-H. The tract at residues 56–371 (SPPPPKKHYE…YHSPPPPKKH (316 aa)) is 12 X 8 AA repeats of S-P-P-P-P-K-K-H. The interval 64-67 (YEYK) is isodityrosine cross-linking. Tandem repeats lie at residues 68–76 (SPPPPVKHY), 77–83 (SPPPVYH), and 84–91 (SPPPPKKH). Residues 68–87 (SPPPPVKHYSPPPVYHSPPP) show a composition bias toward pro residues. The tract at residues 92–95 (YVYK) is isodityrosine cross-linking. 3 repeat units span residues 96 to 104 (SPPPPVKHY), 105 to 111 (SPPPVYH), and 112 to 119 (SPPPPKKH). The segment covering 96–115 (SPPPPVKHYSPPPVYHSPPP) has biased composition (pro residues). The tract at residues 120-123 (YVYK) is isodityrosine cross-linking. 3 consecutive repeat copies span residues 124–132 (SPPPPVKHY), 133–139 (SPPPVYH), and 140–147 (SPPPPKKH). The span at 124–143 (SPPPPVKHYSPPPVYHSPPP) shows a compositional bias: pro residues. Residues 148-151 (YVYK) form an isodityrosine cross-linking region. A run of 3 repeats spans residues 152-160 (SPPPPVKHY), 161-167 (SPPPVYH), and 168-175 (SPPPPKKH). Over residues 152–171 (SPPPPVKHYSPPPVYHSPPP) the composition is skewed to pro residues. An isodityrosine cross-linking region spans residues 176–179 (YVYK). Repeat copies occupy residues 180–188 (SPPPPVKHY), 189–195 (SPPPVYH), and 196–203 (SPPPPKKH). Residues 180-199 (SPPPPVKHYSPPPVYHSPPP) are compositionally biased toward pro residues. An isodityrosine cross-linking region spans residues 204–207 (YVYK). 3 repeat units span residues 208–216 (SPPPPVKHY), 217–223 (SPPPVYH), and 224–231 (SPPPPKKH). The span at 208 to 227 (SPPPPVKHYSPPPVYHSPPP) shows a compositional bias: pro residues. The interval 232–235 (YVYK) is isodityrosine cross-linking. Tandem repeats lie at residues 236–244 (SPPPPVKHY), 245–251 (SPPPVYH), and 252–259 (SPPPPKKH). Residues 236–255 (SPPPPVKHYSPPPVYHSPPP) are compositionally biased toward pro residues. Positions 260–263 (YVYK) are isodityrosine cross-linking. Repeat copies occupy residues 264–272 (SPPPPVKHY), 273–279 (SPPPVYH), and 280–287 (SPPPPKKH). A compositionally biased stretch (pro residues) spans 264–283 (SPPPPVKHYSPPPVYHSPPP). The isodityrosine cross-linking stretch occupies residues 288 to 291 (YVYK). 3 tandem repeats follow at residues 292–300 (SPPPPVKHY), 301–307 (SPPPVYH), and 308–315 (SPPPPKKH). The span at 292–311 (SPPPPVKHYSPPPVYHSPPP) shows a compositional bias: pro residues. The tract at residues 316-319 (YVYK) is isodityrosine cross-linking. 3 consecutive repeat copies span residues 320–328 (SPPPPVKHY), 329–335 (SPPPVYH), and 336–343 (SPPPPKKH). The span at 320-339 (SPPPPVKHYSPPPVYHSPPP) shows a compositional bias: pro residues. An isodityrosine cross-linking region spans residues 344-347 (YVYK). Tandem repeats lie at residues 348–356 (SPPPPVKHY), 357–363 (SPPPVYH), and 364–371 (SPPPPKKH). A compositionally biased stretch (pro residues) spans 348–367 (SPPPPVKHYSPPPVYHSPPP). An isodityrosine cross-linking region spans residues 372–375 (YVYK). Repeat copies occupy residues 376-384 (SPPPPVKHY) and 385-391 (SPPPVYH). The segment covering 376–395 (SPPPPVKHYSPPPVYHSPPP) has biased composition (pro residues). 2 isodityrosine cross-linking regions span residues 400-403 (YVYK) and 420-423 (YLYK).

This sequence belongs to the extensin family. In terms of processing, the proline residues of the Ser-Pro(3) repeats are hydroxylated and then O-glycosylated (arabinosylation) by HPAT1, HPAT2 and HPAT3. Around 20% of Hyp units are in the nonglycosylated form. The Ser residues are O-galactosylated. The lack of Ser-O-galactosylation does not affect Hyp-O-arabinosylation, but both types of O-glycosylation are central for the functionality of the protein. Correct Hyp-O-arabinosylation appears to be responsible for generating a bend on the EXT3 backbone around a YVY motif, which may represent a better scenario for Tyr intramolecular cross-links (isodityrosine type). Post-translationally, synthetised as soluble proteins which become insolubilised in the cell wall through the intermolecular cross-linking of Tyr on adjacent monomers. Isodityrosine (IDT) stabilizes and makes rigid the part of the polypeptide where IDT functional sites are present. In terms of tissue distribution, predominantly expressed in the roots.

The protein localises to the secreted. It is found in the primary cell wall. Functionally, structural component which strengthens the primary cell wall. Forms dendritic structures indicating a propensity for self-assembly through tyrosine cross-linking. Forms intermolecular cross-links exclusively by pulcherosine (three Tyr). Scaffold formation requires an unobstructed C-terminus of EXT3. Required for the correct positioning of the cell plate during cytokinesis in cells of the developing embryo. Extensins contain a characteristic repeat of the pentapeptide Ser-Pro(4). For this particular extensin, a typical repeat of Ser-Pro(3) is found. This is Extensin-3 from Arabidopsis thaliana (Mouse-ear cress).